Reading from the N-terminus, the 583-residue chain is MTTSSIRRQMKNIVNSYSEAEIKVREATSNDPWGPSSSLMTEIADLTYNVVRFSEIMSMVWKRLNDHGKNWRHVYKALTLLDYLIKTGSERVAQQCRENIFAIQTLKDFQYIDRDGKDQGINVREKSKQLVALLKDEERLKVERVQALKTKERMAQVATGVGSNQITFGRGSSQPNLSISHSEQEYGKAGGSPASYHGSTSPRVSSELEQARPQTSGEEELQLQLALAMSREVAEQEERLRRGDDLRLQMALEESRRDTVKVPKKKEVKACCKPGSHSQQTTLLDLMDALPSSGPVAQKTEPWSTGTPANQTNPWGGTVAPANISDPWPSFGTKPAASVDPWGVPTTASIQSVPKNSDPWAASQQPASDAGKTADAWGAAKPSPASGSFELFSNFNGTVKDDFSEFDNLRTSKKPAESGASVPPQDSRTTSPDLFESQSLTSASSKPSSARKTPESFLGPNAALVNLDSLVTKPAPPAQSLNPFLAPGAAAPAPVNPFQVNQPQPLTLNQLRGSPVLGSSASFGSGPGVETVAPMPSVAPHSALGATGSSLTPLGPTAMNMVGSMGIPPSAAQPAGTTNPFLL.

Arginine 8, lysine 11, arginine 25, asparagine 30, arginine 63, and histidine 73 together coordinate a 1,2-diacyl-sn-glycero-3-phospho-(1D-myo-inositol-4,5-bisphosphate). In terms of domain architecture, ENTH spans 12 to 144 (NIVNSYSEAE…KDEERLKVER (133 aa)). Positions 165-181 (QITFGRGSSQPNLSISH) are enriched in polar residues. Residues 165–217 (QITFGRGSSQPNLSISHSEQEYGKAGGSPASYHGSTSPRVSSELEQARPQTSG) are disordered. Arginine 170 is modified (omega-N-methylarginine). Residues serine 173, serine 192, and serine 195 each carry the phosphoserine modification. The span at 197 to 216 (HGSTSPRVSSELEQARPQTS) shows a compositional bias: polar residues. UIM domains are found at residues 218 to 237 (EEEL…AEQE) and 243 to 262 (GDDL…TVKV). Disordered stretches follow at residues 293–384 (SGPV…KPSP) and 411–457 (TSKK…PESF). 4 repeat units span residues 301–303 (EPW), 313–315 (NPW), 326–328 (DPW), and 340–342 (DPW). Residues 301 to 315 (EPWSTGTPANQTNPW) are compositionally biased toward polar residues. The 6 X 3 AA repeats of [DE]-P-W stretch occupies residues 301–377 (EPWSTGTPAN…SDAGKTADAW (77 aa)). Over residues 346-355 (TTASIQSVPK) the composition is skewed to polar residues. Tandem repeats lie at residues 358-360 (DPW) and 375-377 (DAW). The residue at position 431 (serine 431) is a Phosphoserine. A compositionally biased stretch (low complexity) spans 437-448 (SQSLTSASSKPS). Threonine 453 carries the post-translational modification Phosphothreonine. 2 repeat units span residues 482–484 (NPF) and 496–498 (NPF). Residues 482-581 (NPFLAPGAAA…AQPAGTTNPF (100 aa)) are 3 X 3 AA repeats of N-P-F. Serine 514 is subject to Phosphoserine. Copy 3 of the repeat occupies 579–581 (NPF).

Belongs to the epsin family. Binds AP-2 and clathrin. Interacts with ITSN1. Interacts with UBQLN2. Binds EPS15. Ubiquitinated. In terms of tissue distribution, highly expressed in brain. Detected at lower levels in lung, liver, muscle and testis.

It is found in the cytoplasm. In terms of biological role, plays a role in the formation of clathrin-coated invaginations and endocytosis. The chain is Epsin-2 (Epn2) from Rattus norvegicus (Rat).